Consider the following 166-residue polypeptide: NADPH-dependent 7-cyano-7-deazaguanine reductase (166 aa).

Cys-57 serves as the catalytic Thioimide intermediate. Asp-64 (proton donor) is an active-site residue. Residues 79–81 (VES) and 98–99 (HE) each bind substrate.

The protein belongs to the GTP cyclohydrolase I family. QueF type 1 subfamily.

It localises to the cytoplasm. The enzyme catalyses 7-aminomethyl-7-carbaguanine + 2 NADP(+) = 7-cyano-7-deazaguanine + 2 NADPH + 3 H(+). Its pathway is tRNA modification; tRNA-queuosine biosynthesis. Catalyzes the NADPH-dependent reduction of 7-cyano-7-deazaguanine (preQ0) to 7-aminomethyl-7-deazaguanine (preQ1). This is NADPH-dependent 7-cyano-7-deazaguanine reductase from Staphylococcus saprophyticus subsp. saprophyticus (strain ATCC 15305 / DSM 20229 / NCIMB 8711 / NCTC 7292 / S-41).